Here is a 197-residue protein sequence, read N- to C-terminus: Probable calcium-binding protein CML21 (197 aa).

The interval 1–33 (MLRPPPPSSVLTASAAAARPPASVVQPQRQAAH) is disordered. Residues 9–30 (SVLTASAAAARPPASVVQPQRQ) show a composition bias toward low complexity. EF-hand domains are found at residues 37-72 (AETL…LGAR), 126-161 (EKEA…MGLP), and 164-197 (ACMA…AAGN). 14 residues coordinate Ca(2+): D50, D52, D54, E61, D139, D141, D143, Y145, E150, D177, D179, D181, R183, and E188.

In terms of biological role, potential calcium sensor. The chain is Probable calcium-binding protein CML21 (CML21) from Oryza sativa subsp. japonica (Rice).